The sequence spans 468 residues: Citrate synthase, mitochondrial (468 aa).

The N-terminal 30 residues, 1–30, are a transit peptide targeting the mitochondrion; that stretch reads MSLISAGRVCARILGAKNSPCALIAARQAS. Catalysis depends on residues histidine 303 and histidine 349. Arginine 358 lines the oxaloacetate pocket. Aspartate 404 is a catalytic residue. Oxaloacetate contacts are provided by arginine 430 and arginine 450.

It belongs to the citrate synthase family. Homodimer.

Its subcellular location is the mitochondrion matrix. It catalyses the reaction oxaloacetate + acetyl-CoA + H2O = citrate + CoA + H(+). The protein operates within carbohydrate metabolism; tricarboxylic acid cycle; isocitrate from oxaloacetate: step 1/2. In terms of biological role, key enzyme of the Krebs tricarboxylic acid cycle which catalyzes the synthesis of citrate from acetyl coenzyme A and oxaloacetate. The sequence is that of Citrate synthase, mitochondrial (cs) from Xenopus laevis (African clawed frog).